Reading from the N-terminus, the 289-residue chain is Signal peptidase I (289 aa).

The Cytoplasmic portion of the chain corresponds to 1–43 (MKKLTSTTTTLWDNKLFINNLKNFMQTNTESNNNKTTAQEWKS). Residues 44–64 (FILVVVIALMIRILIIESFVV) traverse the membrane as a helical segment. Residues 65–289 (PTGSMKATIL…IFRNLYSIED (225 aa)) lie on the Periplasmic side of the membrane. Residues Ser68 and Lys131 contribute to the active site.

This sequence belongs to the peptidase S26 family.

Its subcellular location is the cell inner membrane. The enzyme catalyses Cleavage of hydrophobic, N-terminal signal or leader sequences from secreted and periplasmic proteins.. This Rickettsia bellii (strain OSU 85-389) protein is Signal peptidase I (lepB).